A 469-amino-acid polypeptide reads, in one-letter code: Signal recognition particle 54 kDa protein (469 aa).

GTP-binding positions include 104 to 111, 184 to 188, and 242 to 245; these read GLYGSGKT, DTAGR, and TKLD. Disordered stretches follow at residues 388–410 and 447–469; these read ELEN…SGKP and QQGG…PFGD. Gly residues predominate over residues 448–469; the sequence is QGGGGGGGMGGMGGGGMGPFGD.

It belongs to the GTP-binding SRP family. SRP54 subfamily. Part of the signal recognition particle protein translocation system, which is composed of SRP and FtsY. Archaeal SRP consists of a 7S RNA molecule of 300 nucleotides and two protein subunits: SRP54 and SRP19.

It is found in the cytoplasm. It catalyses the reaction GTP + H2O = GDP + phosphate + H(+). Its function is as follows. Involved in targeting and insertion of nascent membrane proteins into the cytoplasmic membrane. Binds to the hydrophobic signal sequence of the ribosome-nascent chain (RNC) as it emerges from the ribosomes. The SRP-RNC complex is then targeted to the cytoplasmic membrane where it interacts with the SRP receptor FtsY. The sequence is that of Signal recognition particle 54 kDa protein from Haloarcula marismortui (strain ATCC 43049 / DSM 3752 / JCM 8966 / VKM B-1809) (Halobacterium marismortui).